The sequence spans 143 residues: Large ribosomal subunit protein uL13 (143 aa).

The protein belongs to the universal ribosomal protein uL13 family. In terms of assembly, part of the 50S ribosomal subunit.

Its function is as follows. This protein is one of the early assembly proteins of the 50S ribosomal subunit, although it is not seen to bind rRNA by itself. It is important during the early stages of 50S assembly. The polypeptide is Large ribosomal subunit protein uL13 (Geobacter sulfurreducens (strain ATCC 51573 / DSM 12127 / PCA)).